A 186-amino-acid chain; its full sequence is Large ribosomal subunit protein uL22 (186 aa).

The interval 161–186 (VDDEPAKKKLSKKKLQRQKEKMLRSE) is disordered. The segment covering 177-186 (RQKEKMLRSE) has biased composition (basic and acidic residues).

Belongs to the universal ribosomal protein uL22 family.

In Drosophila pseudoobscura pseudoobscura (Fruit fly), this protein is Large ribosomal subunit protein uL22 (RpL17).